The following is a 186-amino-acid chain: Phosphopantetheine adenylyltransferase (186 aa).

Residue Thr-14 coordinates substrate. ATP contacts are provided by residues 14-15 (TF) and His-22. Substrate-binding residues include Lys-46, Leu-78, and Arg-92. ATP contacts are provided by residues 93–95 (GLR), Glu-103, and 128–134 (WLYISST).

It belongs to the bacterial CoaD family. As to quaternary structure, homohexamer. The cofactor is Mg(2+).

It localises to the cytoplasm. It catalyses the reaction (R)-4'-phosphopantetheine + ATP + H(+) = 3'-dephospho-CoA + diphosphate. It participates in cofactor biosynthesis; coenzyme A biosynthesis; CoA from (R)-pantothenate: step 4/5. Reversibly transfers an adenylyl group from ATP to 4'-phosphopantetheine, yielding dephospho-CoA (dPCoA) and pyrophosphate. The chain is Phosphopantetheine adenylyltransferase from Nitratidesulfovibrio vulgaris (strain ATCC 29579 / DSM 644 / CCUG 34227 / NCIMB 8303 / VKM B-1760 / Hildenborough) (Desulfovibrio vulgaris).